The sequence spans 472 residues: Maintenance of mitochondrial morphology protein 1 (472 aa).

At Met1 to Gly22 the chain is on the lumenal side. Residues Phe23 to Phe43 form a helical membrane-spanning segment. The Cytoplasmic portion of the chain corresponds to Gly44–Gln472. Disordered stretches follow at residues Ser51–Ser92, Leu270–Ser303, and Arg370–Gln472. The span at Ser81–Ser92 shows a compositional bias: polar residues. Residues Gln124–Pro365 form the SMP-LTD domain. Over residues Leu270–Pro280 the composition is skewed to pro residues. Residues Thr281–Asp297 are compositionally biased toward low complexity. The span at Thr450–His460 shows a compositional bias: basic and acidic residues.

Belongs to the MMM1 family. As to quaternary structure, homodimer. Component of the ER-mitochondria encounter structure (ERMES) or MDM complex, composed of mmm1, mdm10, mdm12 and mdm34. A mmm1 homodimer associates with one molecule of mdm12 on each side in a pairwise head-to-tail manner, and the SMP-LTD domains of mmm1 and mdm12 generate a continuous hydrophobic tunnel for phospholipid trafficking.

The protein resides in the endoplasmic reticulum membrane. Functionally, component of the ERMES/MDM complex, which serves as a molecular tether to connect the endoplasmic reticulum (ER) and mitochondria. Components of this complex are involved in the control of mitochondrial shape and protein biogenesis, and function in nonvesicular lipid trafficking between the ER and mitochondria. The mdm12-mmm1 subcomplex functions in the major beta-barrel assembly pathway that is responsible for biogenesis of all outer membrane beta-barrel proteins, and acts in a late step after the SAM complex. The mdm10-mdm12-mmm1 subcomplex further acts in the TOM40-specific pathway after the action of the mdm12-mmm1 complex. Essential for establishing and maintaining the structure of mitochondria and maintenance of mtDNA nucleoids. The polypeptide is Maintenance of mitochondrial morphology protein 1 (Emericella nidulans (strain FGSC A4 / ATCC 38163 / CBS 112.46 / NRRL 194 / M139) (Aspergillus nidulans)).